The sequence spans 337 residues: Large ribosomal subunit protein uL3 (337 aa).

The disordered stretch occupies residues methionine 1–alanine 20.

It belongs to the universal ribosomal protein uL3 family. Part of the 50S ribosomal subunit. Forms a cluster with proteins L14 and L24e.

Its function is as follows. One of the primary rRNA binding proteins, it binds directly near the 3'-end of the 23S rRNA, where it nucleates assembly of the 50S subunit. This chain is Large ribosomal subunit protein uL3, found in Methanosarcina barkeri (strain Fusaro / DSM 804).